A 259-amino-acid chain; its full sequence is Imidazole glycerol phosphate synthase subunit HisF (259 aa).

Residues Asp-11 and Asp-130 contribute to the active site.

This sequence belongs to the HisA/HisF family. Heterodimer of HisH and HisF.

It is found in the cytoplasm. It carries out the reaction 5-[(5-phospho-1-deoxy-D-ribulos-1-ylimino)methylamino]-1-(5-phospho-beta-D-ribosyl)imidazole-4-carboxamide + L-glutamine = D-erythro-1-(imidazol-4-yl)glycerol 3-phosphate + 5-amino-1-(5-phospho-beta-D-ribosyl)imidazole-4-carboxamide + L-glutamate + H(+). It participates in amino-acid biosynthesis; L-histidine biosynthesis; L-histidine from 5-phospho-alpha-D-ribose 1-diphosphate: step 5/9. In terms of biological role, IGPS catalyzes the conversion of PRFAR and glutamine to IGP, AICAR and glutamate. The HisF subunit catalyzes the cyclization activity that produces IGP and AICAR from PRFAR using the ammonia provided by the HisH subunit. This chain is Imidazole glycerol phosphate synthase subunit HisF, found in Nitratidesulfovibrio vulgaris (strain DP4) (Desulfovibrio vulgaris).